The primary structure comprises 264 residues: tRNA pseudouridine synthase A (264 aa).

The Nucleophile role is filled by aspartate 51. Tyrosine 109 contacts substrate.

Belongs to the tRNA pseudouridine synthase TruA family. Homodimer.

The enzyme catalyses uridine(38/39/40) in tRNA = pseudouridine(38/39/40) in tRNA. Formation of pseudouridine at positions 38, 39 and 40 in the anticodon stem and loop of transfer RNAs. The polypeptide is tRNA pseudouridine synthase A (Actinobacillus succinogenes (strain ATCC 55618 / DSM 22257 / CCUG 43843 / 130Z)).